The chain runs to 310 residues: Formimidoylglutamase (310 aa).

Positions 120, 148, 150, 152, 233, and 235 each coordinate Mn(2+).

This sequence belongs to the arginase family. Requires Mn(2+) as cofactor.

The catalysed reaction is N-formimidoyl-L-glutamate + H2O = formamide + L-glutamate. Its pathway is amino-acid degradation; L-histidine degradation into L-glutamate; L-glutamate from N-formimidoyl-L-glutamate (hydrolase route): step 1/1. Its function is as follows. Catalyzes the conversion of N-formimidoyl-L-glutamate to L-glutamate and formamide. The chain is Formimidoylglutamase from Nocardia farcinica (strain IFM 10152).